We begin with the raw amino-acid sequence, 229 residues long: Phosphatidylinositol N-acetylglucosaminyltransferase subunit GPI15 (229 aa).

2 helical membrane passes run 59 to 79 (IQYH…VICL) and 101 to 121 (ILII…GPSV).

It belongs to the PIGH family. Component of the phosphatidylinositol N-acetylglucosaminyltransferase (GPI-GlcNAc transferase) complex composed of at least GPI1, GPI2, GPI3, GPI15, GPI19 and ERI1.

The protein localises to the membrane. It catalyses the reaction a 1,2-diacyl-sn-glycero-3-phospho-(1D-myo-inositol) + UDP-N-acetyl-alpha-D-glucosamine = a 6-(N-acetyl-alpha-D-glucosaminyl)-1-(1,2-diacyl-sn-glycero-3-phospho)-1D-myo-inositol + UDP + H(+). It functions in the pathway glycolipid biosynthesis; glycosylphosphatidylinositol-anchor biosynthesis. Part of the complex catalyzing the transfer of N-acetylglucosamine from UDP-N-acetylglucosamine to phosphatidylinositol, the first step of GPI biosynthesis. In Saccharomyces cerevisiae (strain ATCC 204508 / S288c) (Baker's yeast), this protein is Phosphatidylinositol N-acetylglucosaminyltransferase subunit GPI15 (GPI15).